A 40-amino-acid chain; its full sequence is Photosystem II reaction center protein J (40 aa).

The chain crosses the membrane as a helical span at residues 8–28 (IPLCLIGTVAGIAVIGLVGVF).

It belongs to the PsbJ family. In terms of assembly, PSII is composed of 1 copy each of membrane proteins PsbA, PsbB, PsbC, PsbD, PsbE, PsbF, PsbH, PsbI, PsbJ, PsbK, PsbL, PsbM, PsbT, PsbX, PsbY, PsbZ, Psb30/Ycf12, at least 3 peripheral proteins of the oxygen-evolving complex and a large number of cofactors. It forms dimeric complexes.

It localises to the plastid. Its subcellular location is the chloroplast thylakoid membrane. Its function is as follows. One of the components of the core complex of photosystem II (PSII). PSII is a light-driven water:plastoquinone oxidoreductase that uses light energy to abstract electrons from H(2)O, generating O(2) and a proton gradient subsequently used for ATP formation. It consists of a core antenna complex that captures photons, and an electron transfer chain that converts photonic excitation into a charge separation. This chain is Photosystem II reaction center protein J, found in Triticum aestivum (Wheat).